The following is a 73-amino-acid chain: Conotoxin Gla(3)-TxVI (73 aa).

An N-terminal signal peptide occupies residues M1–A19. A propeptide spanning residues V20 to Q44 is cleaved from the precursor. Intrachain disulfides connect C48/C62, C55/C66, and C61/C71. The residue at position 49 (P49) is a 4-hydroxyproline. A 4-carboxyglutamate; partial modification is found at E53. P54 is subject to 4-hydroxyproline. 4-carboxyglutamate is present on E60. W64 carries the post-translational modification 6'-bromotryptophan.

This sequence belongs to the conotoxin O2 superfamily. As to expression, expressed by the venom duct.

It localises to the secreted. This chain is Conotoxin Gla(3)-TxVI, found in Conus textile (Cloth-of-gold cone).